Reading from the N-terminus, the 193-residue chain is Corrinoid adenosyltransferase (193 aa).

ATP is bound by residues Thr-10–Thr-18, Lys-28, Arg-137–Ser-142, and Asn-163.

It belongs to the Cob(I)alamin adenosyltransferase family.

Its subcellular location is the cytoplasm. The enzyme catalyses 2 cob(II)yrinate a,c diamide + reduced [electron-transfer flavoprotein] + 2 ATP = 2 adenosylcob(III)yrinate a,c-diamide + 2 triphosphate + oxidized [electron-transfer flavoprotein] + 3 H(+). It carries out the reaction 2 cob(II)alamin + reduced [electron-transfer flavoprotein] + 2 ATP = 2 adenosylcob(III)alamin + 2 triphosphate + oxidized [electron-transfer flavoprotein] + 3 H(+). It participates in cofactor biosynthesis; adenosylcobalamin biosynthesis; adenosylcobalamin from cob(II)yrinate a,c-diamide: step 2/7. The sequence is that of Corrinoid adenosyltransferase from Mycobacterium bovis (strain ATCC BAA-935 / AF2122/97).